The sequence spans 244 residues: uncharacterized protein (244 aa).

A compositionally biased stretch (basic residues) spans 1-11 (MSRRSRSRSRS). Disordered regions lie at residues 1–104 (MSRR…TLNE) and 213–244 (ARQK…KFGK). Residues 12–31 (PKRDREERKRREDRDRDRER) are compositionally biased toward basic and acidic residues. Residues 32-46 (KRDRKDRERKRRHRS) show a composition bias toward basic residues. The span at 63 to 75 (FREERRRRERNES) shows a compositional bias: basic and acidic residues. Residues 77-89 (KLPPPPPPPPSDP) show a composition bias toward pro residues. The segment covering 213–223 (ARQKSDMKKNE) has biased composition (basic and acidic residues). Positions 224–234 (QQAILNKSGNS) are enriched in polar residues.

This is an uncharacterized protein from Caenorhabditis elegans.